Reading from the N-terminus, the 286-residue chain is 2-hydroxy-6-oxo-6-phenylhexa-2,4-dienoate hydrolase (286 aa).

Substrate contacts are provided by residues 42–43 (GG), Asn51, Asn111, Thr180, and Arg190. Residue His265 is the Proton acceptor of the active site. Trp266 is a binding site for substrate.

Belongs to the AB hydrolase superfamily. BphD family. As to quaternary structure, homodimer.

It carries out the reaction 2,6-dioxo-6-phenylhexa-3-enoate + H2O = 2-oxopent-4-enoate + benzoate + H(+). It participates in xenobiotic degradation; biphenyl degradation; 2-hydroxy-2,4-pentadienoate and benzoate from biphenyl: step 4/4. Catalyzes an unusual C-C bond hydrolysis of 2-hydroxy-6-oxo-6-phenylhexa-2,4-dienoic acid (HOPDA) to produce benzoic acid and 2-hydroxy-2,4-pentadienoic acid (HPD). The sequence is that of 2-hydroxy-6-oxo-6-phenylhexa-2,4-dienoate hydrolase from Comamonas testosteroni (Pseudomonas testosteroni).